The chain runs to 37 residues: VLLSVGGDADTESPEKKNLGGVSIVDLSMDDFRGLLT.

The segment at 1 to 20 is disordered; sequence VLLSVGGDADTESPEKKNLG. The 37-residue stretch at 1-37 folds into the GH18 domain; that stretch reads VLLSVGGDADTESPEKKNLGGVSIVDLSMDDFRGLLT.

The protein belongs to the glycosyl hydrolase 18 family. IDGF subfamily. Post-translationally, glycosylated.

Its subcellular location is the secreted. Its function is as follows. Cooperates with insulin-like peptides to stimulate the proliferation, polarization and motility of imaginal disk cells. May act by stabilizing the binding of insulin-like peptides to its receptor through a simultaneous interaction with both molecules to form a multiprotein signaling complex. This chain is Chitinase-like protein, found in Heliothis virescens (Tobacco budworm moth).